The following is a 543-amino-acid chain: Exodeoxyribonuclease 7 large subunit (543 aa).

The interval 498 to 543 (VTGEGDKASPPPQAASATTTPAPGRPNPLPKSPKKSEPPAGQGSLF) is disordered.

It belongs to the XseA family. In terms of assembly, heterooligomer composed of large and small subunits.

It is found in the cytoplasm. The enzyme catalyses Exonucleolytic cleavage in either 5'- to 3'- or 3'- to 5'-direction to yield nucleoside 5'-phosphates.. Bidirectionally degrades single-stranded DNA into large acid-insoluble oligonucleotides, which are then degraded further into small acid-soluble oligonucleotides. This Allorhizobium ampelinum (strain ATCC BAA-846 / DSM 112012 / S4) (Agrobacterium vitis (strain S4)) protein is Exodeoxyribonuclease 7 large subunit.